We begin with the raw amino-acid sequence, 413 residues long: 1-acylglycerol-3-phosphate O-acyltransferase Pnpla3 (413 aa).

Over 1–42 (MYDPERRWSLSFAGCGFLGFYHVGATLCLSERAPHLLRDART) the chain is Cytoplasmic. Residues 10-179 (LSFAGCGFLG…SDNVPVLDAK (170 aa)) enclose the PNPLA domain. A GXGXXG motif is present at residues 14–19 (GCGFLG). Residues 43–63 (FFGCSAGALHAVTFVCSLPLG) form a helical; Signal-anchor for type II membrane protein membrane-spanning segment. Residues 45 to 49 (GCSAG) carry the GXSXG motif. The Nucleophile role is filled by serine 47. The Lumenal portion of the chain corresponds to 64 to 413 (RIMEILMDLV…HKPQGNSAGL (350 aa)). Aspartate 166 acts as the Proton acceptor in catalysis. The DGA/G motif lies at 166–168 (DGG). N-linked (GlcNAc...) asparagine glycans are attached at residues asparagine 206 and asparagine 209. The disordered stretch occupies residues 389–413 (KDDHRMLKHGHHPSPHKPQGNSAGL). Positions 394–403 (MLKHGHHPSP) are enriched in basic residues.

As to expression, restricted to adipose tissue. Expressed in inguinal and epididymal white adipose tissues and in interscapular brown adipose tissue. Also expressed in liver in response to high-sucrose diet.

The protein resides in the membrane. Its subcellular location is the lipid droplet. It catalyses the reaction a 1-acyl-sn-glycero-3-phosphate + an acyl-CoA = a 1,2-diacyl-sn-glycero-3-phosphate + CoA. The enzyme catalyses a triacylglycerol + H2O = a diacylglycerol + a fatty acid + H(+). It carries out the reaction a 1-acylglycerol + a 1,3-diacylglycerol = a triacylglycerol + glycerol. The catalysed reaction is a 1-acylglycerol + a 1,2-diacylglycerol = a triacylglycerol + glycerol. It catalyses the reaction 2 a 1-acylglycerol = a 1,2-diacylglycerol + glycerol. The enzyme catalyses 1-(9Z-octadecenoyl)-sn-glycero-3-phosphate + (9Z)-octadecenoyl-CoA = 1,2-di-(9Z-octadecenoyl)-sn-glycero-3-phosphate + CoA. It carries out the reaction 1-(9Z-octadecenoyl)-sn-glycero-3-phosphate + hexadecanoyl-CoA = 1-(9Z)-octadecenoyl-2-hexadecanoyl-sn-glycero-3-phosphate + CoA. The catalysed reaction is 1-(9Z-octadecenoyl)-sn-glycero-3-phosphate + (9Z,12Z)-octadecadienoyl-CoA = 1-(9Z)-octadecenoyl-2-(9Z,12Z)-octadecadienoyl-sn-glycero-3-phosphate + CoA. It catalyses the reaction 1-(9Z-octadecenoyl)-sn-glycero-3-phosphate + (5Z,8Z,11Z,14Z)-eicosatetraenoyl-CoA = 1-(9Z)-octadecenoyl-2-(5Z,8Z,11Z,14Z)-eicosatetraenoyl-sn-glycero-3-phosphate + CoA. The enzyme catalyses 2 1-(9Z-octadecenoyl)-glycerol = 1,2-di-(9Z-octadecenoyl)-glycerol + glycerol. It carries out the reaction 1-(9Z-octadecenoyl)-glycerol + 1,2-di-(9Z-octadecenoyl)-glycerol = 1,2,3-tri-(9Z-octadecenoyl)-glycerol + glycerol. The catalysed reaction is 1-(9Z-octadecenoyl)-glycerol + 1,3-di-(9Z-octadecenoyl)-glycerol = 1,2,3-tri-(9Z-octadecenoyl)-glycerol + glycerol. It catalyses the reaction 1,2,3-tri-(9Z-octadecenoyl)-glycerol + H2O = 1,3-di-(9Z-octadecenoyl)-glycerol + (9Z)-octadecenoate + H(+). The enzyme catalyses a 1,2-diacyl-sn-glycero-3-phosphocholine + H2O = a 1-acyl-sn-glycero-3-phosphocholine + a fatty acid + H(+). It functions in the pathway phospholipid metabolism. It participates in glycerolipid metabolism. Specifically catalyzes coenzyme A (CoA)-dependent acylation of 1-acyl-sn-glycerol 3-phosphate (2-lysophosphatidic acid/LPA) to generate phosphatidic acid (PA), an important metabolic intermediate and precursor for both triglycerides and glycerophospholipids. Does not esterify other lysophospholipids. Acyl donors are long chain (at least C16) fatty acyl-CoAs: arachidonoyl-CoA, linoleoyl-CoA, oleoyl-CoA and at a lesser extent palmitoyl-CoA. Additionally possesses low triacylglycerol lipase and CoA-independent acylglycerol transacylase activities and thus may play a role in acyl-chain remodeling of triglycerides. In vitro may express hydrolytic activity against glycerolipids triacylglycerol, diacylglycerol and monoacylglycerol, with a strong preference for oleic acid as the acyl moiety. However, the triacylglycerol hydrolase activity is controversial and may be very low. Possesses phospholipase A2 activity. The sequence is that of 1-acylglycerol-3-phosphate O-acyltransferase Pnpla3 from Mus musculus (Mouse).